The following is a 333-amino-acid chain: Probable xyloglucan endotransglucosylase/hydrolase protein 27 (333 aa).

A signal peptide spans 1 to 20 (METLSRLLVFMSLFSGLVSG). The GH16 domain maps to 21 to 223 (FALQNLPITS…YKYAPYIARF (203 aa)). The Nucleophile role is filled by glutamate 108. The active-site Proton donor is glutamate 112. Xyloglucan is bound by residues glutamate 112 and 125–127 (QTN). An N-linked (GlcNAc...) asparagine glycan is attached at asparagine 131. Xyloglucan contacts are provided by residues 135-139 (HSGRE), 202-203 (KW), glycine 207, and arginine 282. The cysteines at positions 277 and 290 are disulfide-linked. Residues 311-333 (IPRRHRNGKHRSKRSRVDGTESI) form a disordered region. Basic residues predominate over residues 312–324 (PRRHRNGKHRSKR).

Belongs to the glycosyl hydrolase 16 family. XTH group 3 subfamily. Post-translationally, contains at least one intrachain disulfide bond essential for its enzymatic activity. Expressed in 7 day old seedlings, roots, hypocotyls, rosette leaves, internodes between nodes bearing axillary shoots, nodes bearing flowers, flower buds, anthers and siliques.

It is found in the secreted. The protein resides in the cell wall. Its subcellular location is the extracellular space. The protein localises to the apoplast. The enzyme catalyses breaks a beta-(1-&gt;4) bond in the backbone of a xyloglucan and transfers the xyloglucanyl segment on to O-4 of the non-reducing terminal glucose residue of an acceptor, which can be a xyloglucan or an oligosaccharide of xyloglucan.. Functionally, catalyzes xyloglucan endohydrolysis (XEH) and/or endotransglycosylation (XET). Cleaves and religates xyloglucan polymers, an essential constituent of the primary cell wall, and thereby participates in cell wall construction of growing tissues. Required for cell wall modification during the development of tracheary elements. The polypeptide is Probable xyloglucan endotransglucosylase/hydrolase protein 27 (XTH27) (Arabidopsis thaliana (Mouse-ear cress)).